A 234-amino-acid polypeptide reads, in one-letter code: ATP-dependent dethiobiotin synthetase BioD (234 aa).

Residue 14-19 (GVGKTI) participates in ATP binding. Thr18 serves as a coordination point for Mg(2+). Lys39 is an active-site residue. Ser43 contributes to the substrate binding site. ATP is bound by residues Asp56, 118–121 (EGAG), 178–179 (NH), and 208–210 (PWL). The Mg(2+) site is built by Asp56 and Glu118.

It belongs to the dethiobiotin synthetase family. As to quaternary structure, homodimer. Mg(2+) is required as a cofactor.

It localises to the cytoplasm. The catalysed reaction is (7R,8S)-7,8-diammoniononanoate + CO2 + ATP = (4R,5S)-dethiobiotin + ADP + phosphate + 3 H(+). The protein operates within cofactor biosynthesis; biotin biosynthesis; biotin from 7,8-diaminononanoate: step 1/2. Its function is as follows. Catalyzes a mechanistically unusual reaction, the ATP-dependent insertion of CO2 between the N7 and N8 nitrogen atoms of 7,8-diaminopelargonic acid (DAPA, also called 7,8-diammoniononanoate) to form a ureido ring. The sequence is that of ATP-dependent dethiobiotin synthetase BioD from Marinobacter nauticus (strain ATCC 700491 / DSM 11845 / VT8) (Marinobacter aquaeolei).